The following is a 149-amino-acid chain: Protein FAM72A (149 aa).

It belongs to the FAM72 family. Interacts with UNG. As to expression, expressed at high levels in stomach and also in kidney and, at low levels, in heart (at protein level). In the stomach, highly expressed in foveolar cells, parietal cells and chief cells (at protein level). In kidney, expressed in endothelial cells, mesangial and epithelial cells (parietal and visceral epithelium) around glomerulus (at protein level).

Its subcellular location is the cytoplasm. The protein localises to the mitochondrion. Functionally, may play a role in the regulation of cellular reactive oxygen species metabolism. May participate in cell growth regulation. In Bos taurus (Bovine), this protein is Protein FAM72A (FAM72A).